The primary structure comprises 1015 residues: Condensin complex subunit 3 (1015 aa).

5 HEAT repeats span residues glycine 94–glutamate 131, aspartate 138–lysine 173, aspartate 174–lysine 212, methionine 238–arginine 275, and phenylalanine 276–leucine 313. Serine 390 bears the Phosphoserine mark. HEAT repeat units lie at residues glutamate 399 to isoleucine 436, serine 439 to valine 478, and aspartate 617 to isoleucine 654. Serine 674 carries the post-translational modification Phosphoserine. 2 HEAT repeats span residues alanine 687–leucine 724 and lysine 865–alanine 907. Threonine 931 carries the post-translational modification Phosphothreonine. Polar residues predominate over residues alanine 941–asparagine 950. The disordered stretch occupies residues alanine 941–alanine 994. Residues serine 973, serine 975, serine 1002, and serine 1015 each carry the phosphoserine modification. A compositionally biased stretch (basic and acidic residues) spans glutamate 974–methionine 988.

The protein belongs to the CND3 (condensin subunit 3) family. Component of the condensin complex, which contains the SMC2 and SMC4 heterodimer, and three non SMC subunits that probably regulate the complex: NCAPH/BRRN1, NCAPD2/CAPD2 and NCAPG. In terms of processing, phosphorylated by CDK1. Its phosphorylation, as well as that of NCAPD2 and NCAPH subunits, activates the condensin complex and is required for chromosome condensation. Highly expressed in testis.

Its subcellular location is the nucleus. The protein resides in the cytoplasm. It localises to the chromosome. In terms of biological role, regulatory subunit of the condensin complex, a complex required for conversion of interphase chromatin into mitotic-like condense chromosomes. The condensin complex probably introduces positive supercoils into relaxed DNA in the presence of type I topoisomerases and converts nicked DNA into positive knotted forms in the presence of type II topoisomerases. The polypeptide is Condensin complex subunit 3 (NCAPG) (Homo sapiens (Human)).